The following is a 183-amino-acid chain: MGAFIGEIIALSMMALALGMDAFSVALGMGLLRLRLRQMFYIGLTIGLFHILMPLAGMAVGRLLSREFGSVATYAGGALLLWLGGQMIIASFRRDDGSPLFPRGVGLLFFAFSVSLDSFSVGLSLGIFGARTMVTILLFGLFSMVLTWVGLFVGRHFQQWLGSYSEALGGSILLAFGLKLLFL.

The next 6 helical transmembrane spans lie at 8–28 (IIALSMMALALGMDAFSVALG), 40–60 (FYIGLTIGLFHILMPLAGMAV), 72–92 (ATYAGGALLLWLGGQMIIASF), 108–128 (LFFAFSVSLDSFSVGLSLGIF), 133–153 (MVTILLFGLFSMVLTWVGLFV), and 163–183 (SYSEALGGSILLAFGLKLLFL).

This sequence belongs to the MntP (TC 9.B.29) family.

The protein resides in the cell membrane. Functionally, probably functions as a manganese efflux pump. The sequence is that of Putative manganese efflux pump MntP from Geobacillus kaustophilus (strain HTA426).